The primary structure comprises 266 residues: Tryptophan synthase alpha chain (266 aa).

Active-site proton acceptor residues include glutamate 49 and aspartate 60.

It belongs to the TrpA family. As to quaternary structure, tetramer of two alpha and two beta chains.

It carries out the reaction (1S,2R)-1-C-(indol-3-yl)glycerol 3-phosphate + L-serine = D-glyceraldehyde 3-phosphate + L-tryptophan + H2O. It participates in amino-acid biosynthesis; L-tryptophan biosynthesis; L-tryptophan from chorismate: step 5/5. Its function is as follows. The alpha subunit is responsible for the aldol cleavage of indoleglycerol phosphate to indole and glyceraldehyde 3-phosphate. In Opitutus terrae (strain DSM 11246 / JCM 15787 / PB90-1), this protein is Tryptophan synthase alpha chain.